Reading from the N-terminus, the 308-residue chain is Ribosomal RNA large subunit methyltransferase F (308 aa).

Belongs to the methyltransferase superfamily. METTL16/RlmF family.

It is found in the cytoplasm. It catalyses the reaction adenosine(1618) in 23S rRNA + S-adenosyl-L-methionine = N(6)-methyladenosine(1618) in 23S rRNA + S-adenosyl-L-homocysteine + H(+). Specifically methylates the adenine in position 1618 of 23S rRNA. This chain is Ribosomal RNA large subunit methyltransferase F, found in Salmonella schwarzengrund (strain CVM19633).